The chain runs to 272 residues: Tryptophan synthase alpha chain (272 aa).

Active-site proton acceptor residues include Glu-49 and Asp-60.

The protein belongs to the TrpA family. As to quaternary structure, tetramer of two alpha and two beta chains.

It carries out the reaction (1S,2R)-1-C-(indol-3-yl)glycerol 3-phosphate + L-serine = D-glyceraldehyde 3-phosphate + L-tryptophan + H2O. It functions in the pathway amino-acid biosynthesis; L-tryptophan biosynthesis; L-tryptophan from chorismate: step 5/5. Its function is as follows. The alpha subunit is responsible for the aldol cleavage of indoleglycerol phosphate to indole and glyceraldehyde 3-phosphate. The polypeptide is Tryptophan synthase alpha chain (Psychrobacter cryohalolentis (strain ATCC BAA-1226 / DSM 17306 / VKM B-2378 / K5)).